The sequence spans 600 residues: UPF0588 membrane protein C20F10.02c (600 aa).

2 helical membrane passes run 409–429 and 437–457; these read LSAT…TSLV and YHWL…SVLI.

The protein belongs to the UPF0588 family.

The protein localises to the membrane. This chain is UPF0588 membrane protein C20F10.02c, found in Schizosaccharomyces pombe (strain 972 / ATCC 24843) (Fission yeast).